Here is a 365-residue protein sequence, read N- to C-terminus: Aminomethyltransferase (365 aa).

Belongs to the GcvT family. In terms of assembly, the glycine cleavage system is composed of four proteins: P, T, L and H.

It catalyses the reaction N(6)-[(R)-S(8)-aminomethyldihydrolipoyl]-L-lysyl-[protein] + (6S)-5,6,7,8-tetrahydrofolate = N(6)-[(R)-dihydrolipoyl]-L-lysyl-[protein] + (6R)-5,10-methylene-5,6,7,8-tetrahydrofolate + NH4(+). The glycine cleavage system catalyzes the degradation of glycine. The polypeptide is Aminomethyltransferase (Chlorobaculum parvum (strain DSM 263 / NCIMB 8327) (Chlorobium vibrioforme subsp. thiosulfatophilum)).